The chain runs to 249 residues: Ubiquinone biosynthesis O-methyltransferase (249 aa).

R41, G72, D93, and M136 together coordinate S-adenosyl-L-methionine.

This sequence belongs to the methyltransferase superfamily. UbiG/COQ3 family.

The enzyme catalyses a 3-demethylubiquinol + S-adenosyl-L-methionine = a ubiquinol + S-adenosyl-L-homocysteine + H(+). The catalysed reaction is a 3-(all-trans-polyprenyl)benzene-1,2-diol + S-adenosyl-L-methionine = a 2-methoxy-6-(all-trans-polyprenyl)phenol + S-adenosyl-L-homocysteine + H(+). The protein operates within cofactor biosynthesis; ubiquinone biosynthesis. Its function is as follows. O-methyltransferase that catalyzes the 2 O-methylation steps in the ubiquinone biosynthetic pathway. The sequence is that of Ubiquinone biosynthesis O-methyltransferase from Methylobacterium sp. (strain 4-46).